We begin with the raw amino-acid sequence, 539 residues long: MKKNYLLLYFIFLLCGSIAAQDWNGIPVPANPGNGMTWQLQDNVSDSFNYTSSEGNRPTAFTSKWKPSYINGWTGPGSTIFNAPQAWTNGSQLAIQAQPAGNGKSYNGIITSKNKIQYPVYMEIKAKIMDQVLANAFWTLTDDETQEIDIMEGYGSDRGGTWFAQRMHLSHHTFIRNPFTDYQPMGDATWYYNGGTPWRSAYHRYGCYWKDPFTLEYYIDGVKVRTVTRAEIDPNNHLGGTGLNQATNIIIDCENQTDWRPAATQEELADDSKNIFWVDWIRVYKPVAVSGGGNNGNDGATEFQYDLGTDTSAVWPGYTRVSNTTRAGNFGWANTNDIGSRDRGASNGRNNINRDINFSSQTRFFTQDLSNGTYNVLITFGDTYARKNMNVAAEGQNKLTNINTNAGQYVSRSFDVNVNDGKLDLRFSVGNGGDVWSITRIWIRKVTSNSANLLAAKGLTLEDPVETTEFLYPNPAKTDDFVTVPNSEIGSSIIIYNSAGQVVKKVSVVSENQKISLEGFAKGMYFINLNGQSTKLIVQ.

A signal peptide spans 1–19 (MKKNYLLLYFIFLLCGSIA). Positions 21-289 (QDWNGIPVPA…WIRVYKPVAV (269 aa)) constitute a GH16 domain. Residues W73, 82-92 (NAPQAWTNGSQ), 96-98 (QAQ), and E144 contribute to the substrate site. The active-site Nucleophile is the E147. The Proton donor role is filled by E152. Substrate-binding residues include R176 and D271. Residues 332-353 (WANTNDIGSRDRGASNGRNNIN) form a disordered region.

This sequence belongs to the glycosyl hydrolase 16 family. As to quaternary structure, monomer. In terms of processing, proteolytically cleaved into mature beta-agarase A catalytic chain (AgaAc).

It is found in the secreted. It catalyses the reaction Hydrolysis of (1-&gt;4)-beta-D-galactosidic linkages in agarose, giving the tetramer as the predominant product.. Its function is as follows. Cleaves the beta-1,4-linkages between beta-D-galactose and alpha-L-3,6-anhydro-galactose residues in agarose. Cleaves agarose in a random manner with retention of the anomeric-bond configuration, producing beta-anomers that give rise progressively to alpha-anomers when mutarotation takes place. This is Beta-agarase A (agaA) from Zobellia galactanivorans (strain DSM 12802 / CCUG 47099 / CIP 106680 / NCIMB 13871 / Dsij).